The following is a 504-amino-acid chain: Glucose-6-phosphate isomerase (504 aa).

Residue glutamate 333 is the Proton donor of the active site. Residues histidine 364 and lysine 473 contribute to the active site.

The protein belongs to the GPI family.

It is found in the cytoplasm. It carries out the reaction alpha-D-glucose 6-phosphate = beta-D-fructose 6-phosphate. Its pathway is carbohydrate biosynthesis; gluconeogenesis. It participates in carbohydrate degradation; glycolysis; D-glyceraldehyde 3-phosphate and glycerone phosphate from D-glucose: step 2/4. Catalyzes the reversible isomerization of glucose-6-phosphate to fructose-6-phosphate. This Xanthomonas axonopodis pv. citri (strain 306) protein is Glucose-6-phosphate isomerase.